The sequence spans 796 residues: Cadherin-11 (796 aa).

A signal peptide spans 1-24; the sequence is MKENYCLQAALVCLSMLYHSQAFA. A propeptide spanning residues 25-53 is cleaved from the precursor; the sequence is LERRSHLHPSFHGHHEKGKEGQVLQRSKR. Cadherin domains are found at residues 54-159, 160-268, 269-383, 384-486, and 487-612; these read GWVW…PPEF, LHEI…PPKF, PQSV…PPMF, LAPS…DNAP, and KFAA…YILN. Over 54–617 the chain is Extracellular; the sequence is GWVWNQFFVI…AYILNAGLST (564 aa). Asparagine 455 and asparagine 540 each carry an N-linked (GlcNAc...) asparagine glycan. Residues 618 to 640 traverse the membrane as a helical segment; it reads GALIAILACIVILLVIVVLFVTL. At 641–796 the chain is on the cytoplasmic side; sequence RRQKKEPLIV…GSKDTFDDDS (156 aa). Phosphoserine is present on serine 788. At threonine 791 the chain carries Phosphothreonine.

As to quaternary structure, interacts with PCDH8. As to expression, selectively expressed in osteoblastic cell lines, precursor cell lines of osteoblasts, and primary osteoblastic cells from calvaria, as well as in lung, testis, and brain tissues at low levels.

Its subcellular location is the cell membrane. Functionally, cadherins are calcium-dependent cell adhesion proteins. They preferentially interact with themselves in a homophilic manner in connecting cells; cadherins may thus contribute to the sorting of heterogeneous cell types. Required for proper focal adhesion assembly. Involved in the regulation of cell migration. In Mus musculus (Mouse), this protein is Cadherin-11 (Cdh11).